The sequence spans 132 residues: Replication enhancer protein (132 aa).

It belongs to the geminiviridae replication enhancer protein family. As to quaternary structure, homooligomer. Interacts with the replication-associated protein (REP). Interacts with host proliferating cell nuclear antigen (PCNA). Interacts with host retinoblastoma-related protein 1 (RBR1), and may thereby deregulate the host cell cycle. Oligomerization and interaction with PCNA are necessary for optimal replication enhancement.

Increases viral DNA accumulation. Enhances infectivity and symptom expression. This is Replication enhancer protein from Pepper huasteco yellow vein virus (PHYVV).